A 248-amino-acid chain; its full sequence is tRNA pseudouridine synthase A (248 aa).

Catalysis depends on aspartate 53, which acts as the Nucleophile. Tyrosine 111 provides a ligand contact to substrate.

This sequence belongs to the tRNA pseudouridine synthase TruA family. As to quaternary structure, homodimer.

The enzyme catalyses uridine(38/39/40) in tRNA = pseudouridine(38/39/40) in tRNA. Functionally, formation of pseudouridine at positions 38, 39 and 40 in the anticodon stem and loop of transfer RNAs. This Listeria welshimeri serovar 6b (strain ATCC 35897 / DSM 20650 / CCUG 15529 / CIP 8149 / NCTC 11857 / SLCC 5334 / V8) protein is tRNA pseudouridine synthase A.